The chain runs to 612 residues: Indole-3-acetic acid-amido synthetase GH3.6 (612 aa).

The protein belongs to the IAA-amido conjugating enzyme family. As to expression, expressed in cotyledons, stipules, true leaves, hypocotyls, and all parts of the roots. Not detected in flowers.

Functionally, catalyzes the synthesis of indole-3-acetic acid (IAA)-amino acid conjugates, providing a mechanism for the plant to cope with the presence of excess auxin. Strongly reactive with Glu, Gln, Trp, Asp, Ala, Leu, Phe, Gly, Tyr, Met, Ile and Val. Little or no product formation with His, Ser, Thr, Arg, Lys, or Cys. Also active on pyruvic and butyric acid analogs of IAA, PAA and the synthetic auxin naphthaleneacetic acid (NAA). The two chlorinated synthetic auxin herbicides 2,4-D and 3,6-dichloro-o-anisic acid (dicamba) cannot be used as substrates. Involved in auxin signal transduction. Inhibits shoot and hypocotyl cell elongation, and lateral root cell differentiation in light. The chain is Indole-3-acetic acid-amido synthetase GH3.6 (GH3.6) from Arabidopsis thaliana (Mouse-ear cress).